The following is a 2080-amino-acid chain: Fatty acid synthase beta subunit TOXC (2080 aa).

Positions 170–397 constitute a Starter acyltransferase (SAT) domain; sequence GRYFDELREL…LYRFNLLLRK (228 aa). Ser-276 acts as the For acetyltransferase activity in catalysis. Residues 585–830 form an enoyl reductase (ER) domain region; the sequence is SRLLGLPPIM…VIVETEGLND (246 aa). Residues 1155–1644 form a dehydratase (DH) domain region; that stretch reads GKSRSWRHAI…LPNQKLEVKL (490 aa). Residues 1544-1662 form the MaoC-like domain; sequence SVDFEDPVSV…MIRLHIEARA (119 aa). In terms of domain architecture, Malonyl-CoA:ACP transacylase (MAT) spans 1682 to 2046; the sequence is TYVFTGQGSQ…FQYVYDLTGS (365 aa). The tract at residues 1683–2046 is malonyl/palmitoyl transferase (MT/PT) domain; it reads YVFTGQGSQE…FQYVYDLTGS (364 aa). Ser-1828 functions as the For malonyltransferase activity in the catalytic mechanism.

This sequence belongs to the fungal fatty acid synthetase subunit beta family.

It catalyses the reaction acetyl-CoA + n malonyl-CoA + 2n NADPH + 4n H(+) = a long-chain-acyl-CoA + n CoA + n CO2 + 2n NADP(+).. The enzyme catalyses holo-[ACP] + acetyl-CoA = acetyl-[ACP] + CoA. The catalysed reaction is holo-[ACP] + malonyl-CoA = malonyl-[ACP] + CoA. It carries out the reaction a (3R)-hydroxyacyl-[ACP] = a (2E)-enoyl-[ACP] + H2O. It catalyses the reaction a 2,3-saturated acyl-[ACP] + NAD(+) = a (2E)-enoyl-[ACP] + NADH + H(+). The enzyme catalyses (9Z)-octadecenoyl-[ACP] + H2O = (9Z)-octadecenoate + holo-[ACP] + H(+). The protein operates within mycotoxin biosynthesis; HC-toxin biosynthesis. Its function is as follows. Fatty acid synthase beta subunit, part of the diffuse TOX2 gene cluster that mediates the biosynthesis of the HC-toxin, cyclic tetrapeptide of structure cyclo(D-Pro-L-Ala-D-Ala-L-Aeo), where Aeo stands for 2-amino-9,10-epoxi-8-oxodecanoic acid. HC-toxin is a determinant of specificity and virulence in the interaction between the producing fungus and its host, maize. TOXC contribute to the synthesis of the decanoic backbone of 2-amino-9,10-epoxi-8-oxodecanoic acid, an essential precursor for the production of the major forms of HC-toxin by the non-ribosomal peptide synthetase HTS1. The protein is Fatty acid synthase beta subunit TOXC of Cochliobolus carbonum (Maize leaf spot fungus).